Here is a 217-residue protein sequence, read N- to C-terminus: Homologous-pairing protein 2 homolog (217 aa).

The stretch at 84-152 forms a coiled coil; the sequence is ADLHGLDASI…RLKNIKAATN (69 aa). The interval 118–182 is DNA-binding; it reads TSALTTPEMQ…WRKRKRMTTE (65 aa).

This sequence belongs to the HOP2 family. In terms of assembly, interacts with the DNA-binding domain of the nuclear receptors NR3C1/GR, ESR2/ER-beta, THRB and RXRA. Forms a stable heterodimer with MND1. Interacts with PSMC3/TBP1. Post-translationally, phosphorylated by PKA, PKC and MAPK. Highly expressed in testis and more specifically in spermatocytes. Detected in spleen, ovary and thymus.

Its subcellular location is the nucleus. Plays an important role in meiotic recombination. Stimulates DMC1-mediated strand exchange required for pairing homologous chromosomes during meiosis. The complex PSMC3IP/MND1 binds DNA, stimulates the recombinase activity of DMC1 as well as DMC1 D-loop formation from double-strand DNA. This complex stabilizes presynaptic RAD51 and DMC1 filaments formed on single strand DNA to capture double-strand DNA. This complex stimulates both synaptic and presynaptic critical steps in RAD51 and DMC1-promoted homologous pairing. May inhibit HIV-1 viral protein TAT activity and modulate the activity of proteasomes through association with PSMC3. This is Homologous-pairing protein 2 homolog (Psmc3ip) from Mus musculus (Mouse).